A 260-amino-acid polypeptide reads, in one-letter code: Small ribosomal subunit protein uS2 (260 aa).

Residues 224 to 260 (GRQGQDAGEDSAEKTFADTADGEGDFEESSNNENQEA) form a disordered region. The span at 243–260 (ADGEGDFEESSNNENQEA) shows a compositional bias: acidic residues.

The protein belongs to the universal ribosomal protein uS2 family.

This Oenococcus oeni (strain ATCC BAA-331 / PSU-1) protein is Small ribosomal subunit protein uS2.